The following is a 359-amino-acid chain: 3-dehydroquinate synthase (359 aa).

Residues Asp-70–Lys-75, Gly-105–Asp-109, Thr-129–Thr-130, Lys-142, Lys-151, and Phe-169–Thr-172 each bind NAD(+). Zn(2+) contacts are provided by Glu-184, His-247, and His-264.

This sequence belongs to the sugar phosphate cyclases superfamily. Dehydroquinate synthase family. Requires Co(2+) as cofactor. It depends on Zn(2+) as a cofactor. The cofactor is NAD(+).

The protein resides in the cytoplasm. The enzyme catalyses 7-phospho-2-dehydro-3-deoxy-D-arabino-heptonate = 3-dehydroquinate + phosphate. The protein operates within metabolic intermediate biosynthesis; chorismate biosynthesis; chorismate from D-erythrose 4-phosphate and phosphoenolpyruvate: step 2/7. Its function is as follows. Catalyzes the conversion of 3-deoxy-D-arabino-heptulosonate 7-phosphate (DAHP) to dehydroquinate (DHQ). The protein is 3-dehydroquinate synthase of Francisella tularensis subsp. holarctica (strain OSU18).